The following is a 211-amino-acid chain: MSKVLFIKASPLPNEVSRSSQVAETFMAEYKAKNPSDTVEELVLYNTEVPLLDLELMTAGRELQAGKAFTDLAPDVQKKLNAYNALTEQFLAADKYVFVFPLWNLGIPPLLKAYIDTFVIAGKSFRYTEHGPEALLKDKKAILIHGSGGIYSAGPTSSFTHGEPYLRTILQFIGINVVPSIFVEGIDHNPSKEAEIVAAAKAVAQESAAEF.

FMN-binding positions include Ser-10 and 17-19; that span reads SRS.

The protein belongs to the azoreductase type 1 family. In terms of assembly, homodimer. Requires FMN as cofactor.

The catalysed reaction is 2 a quinone + NADH + H(+) = 2 a 1,4-benzosemiquinone + NAD(+). It carries out the reaction N,N-dimethyl-1,4-phenylenediamine + anthranilate + 2 NAD(+) = 2-(4-dimethylaminophenyl)diazenylbenzoate + 2 NADH + 2 H(+). In terms of biological role, quinone reductase that provides resistance to thiol-specific stress caused by electrophilic quinones. Functionally, also exhibits azoreductase activity. Catalyzes the reductive cleavage of the azo bond in aromatic azo compounds to the corresponding amines. The chain is FMN-dependent NADH:quinone oxidoreductase 2 from Listeria monocytogenes serotype 4b (strain F2365).